A 560-amino-acid chain; its full sequence is Nuclear receptor subfamily 5 group A member 2 (560 aa).

The segment at 21 to 55 (IASAPGSETRHSPKREEQLREKRAGLPDRHRRPIP) is disordered. Over residues 28-48 (ETRHSPKREEQLREKRAGLPD) the composition is skewed to basic and acidic residues. The nuclear receptor DNA-binding region spans 104-175 (EELCPVCGDK…KCIDVGMKLE (72 aa)). Zn(2+)-binding residues include Cys107, Cys110, Cys124, Cys127, Cys143, Cys149, Cys159, and Cys162. 2 consecutive NR C4-type zinc fingers follow at residues 107–127 (CPVC…CESC) and 143–167 (CIEN…FKKC). The C-terminal extension (CTE) stretch occupies residues 173 to 188 (KLEAVRADRMRGGRNK). The short motif at 189 to 208 (FGPMYKRDRALKQQKKALIR) is the FTZ-F1 box element. Lys289 participates in a covalent cross-link: Glycyl lysine isopeptide (Lys-Gly) (interchain with G-Cter in SUMO1). The NR LBD domain occupies 319 to 558 (SIPHLILELL…NLLIEMLHAK (240 aa)). Positions 535 and 539 each coordinate a phospholipid derivative. Residues 547 to 558 (YNNLLIEMLHAK) are AF-2.

This sequence belongs to the nuclear hormone receptor family. NR5 subfamily. As to quaternary structure, monomer; Binds DNA as a monomer. Interacts with nuclear receptor corepressors NR0B1 and NR0B2; repressing NR5A2 nuclear receptor activity. Interacts with nuclear receptor coactivators CTNNB1, PPARGC1A and NCOA2; interaction takes place following ligand-binding and promotes target gene activation. Interacts (when sumoylated) with GPS2; interaction with GPS2 onto hepatic acute phase protein promoters prevents N-Cor corepressor complex dissociation. Interacts with HNF1A. Interacts with GRIP1. Post-translationally, sumoylated by SUMO1 at Lys-289 during the hepatic acute phase response, leading to promote interaction with GPS2 and prevent N-Cor corepressor complex dissociation.

Its subcellular location is the nucleus. The protein resides in the chromosome. Its function is as follows. Orphan nuclear receptor that binds DNA as a monomer to the 5'-TCAAGGCCA-3' sequence and controls expression of target genes: regulates key biological processes, such as early embryonic development, cholesterol and bile acid synthesis pathways, as well as liver and pancreas morphogenesis. Ligand-binding causes conformational change which causes recruitment of coactivators, promoting target gene activation. The specific ligand is unknown, but specific phospholipids, such as phosphatidylethanolamine, phosphatidylserine, dilauroyl phosphatidylcholine and diundecanoyl phosphatidylcholine can act as ligand in vitro. Acts as a pioneer transcription factor, which unwraps target DNA from histones and elicits local opening of closed chromatin. Plays a central role during preimplantation stages of embryonic development. Plays a minor role in zygotic genome activation (ZGA) by regulating a small set of two-cell stage genes. Plays a major role in morula development (2-16 cells embryos) by acting as a master regulator at the 8-cell stage, controlling expression of lineage-specifying transcription factors and genes involved in mitosis, telomere maintenance and DNA repair. Zygotic NR5A2 binds to both closed and open chromatin with other transcription factors, often at SINE B1/Alu repeats DNA elements, promoting chromatin accessibility at nearby regulatory regions. Also involved in the epiblast stage of development and embryonic stem cell pluripotency, by promoting expression of POU5F1/OCT4. Regulates other processes later in development, such as formation of connective tissue in lower jaw and middle ear, neural stem cell differentiation, ovarian follicle development and Sertoli cell differentiation. Involved in exocrine pancreas development and acinar cell differentiation. Acts as an essential transcriptional regulator of lipid metabolism. Key regulator of cholesterol 7-alpha-hydroxylase gene (CYP7A) expression in liver. Activates the transcription of CYP2C38. Also acts as a negative regulator of inflammation in different organs, such as intestine, liver and pancreas. Protects against intestinal inflammation via its ability to regulate glucocorticoid production. Plays an anti-inflammatory role during the hepatic acute phase response by acting as a corepressor: inhibits the hepatic acute phase response by preventing dissociation of the N-Cor corepressor complex. Acts as a regulator of immunity by promoting lymphocyte T-cell development, proliferation and effector functions. Also involved in resolution of endoplasmic reticulum stress in the liver. The chain is Nuclear receptor subfamily 5 group A member 2 from Mus musculus (Mouse).